The primary structure comprises 105 residues: Small ribosomal subunit protein uS17 (105 aa).

The protein belongs to the universal ribosomal protein uS17 family. Part of the 30S ribosomal subunit. Contacts protein S12.

Functionally, one of the primary rRNA binding proteins, it binds directly to 16S rRNA where it helps nucleate assembly of the platform and body of the 30S subunit by bringing together and stabilizing interactions between several different RNA helices. The combined cluster of proteins S8, S12 and S17 appears to hold together the shoulder and platform of the 30S subunit. This is Small ribosomal subunit protein uS17 from Thermus thermophilus (strain ATCC 27634 / DSM 579 / HB8).